The chain runs to 507 residues: Probable cytochrome P450 6a18 (507 aa).

C451 serves as a coordination point for heme.

The protein belongs to the cytochrome P450 family. Requires heme as cofactor.

It localises to the endoplasmic reticulum membrane. The protein localises to the microsome membrane. Functionally, may be involved in the metabolism of insect hormones and in the breakdown of synthetic insecticides. The polypeptide is Probable cytochrome P450 6a18 (Cyp6a18) (Drosophila melanogaster (Fruit fly)).